The following is a 168-amino-acid chain: Ubiquitin-fold modifier-conjugating enzyme 1 (168 aa).

Residue Cys-119 is the Glycyl thioester intermediate of the active site.

Belongs to the ubiquitin-conjugating enzyme family. UFC1 subfamily.

Functionally, E2-like enzyme which forms an intermediate with UFM1 via a thioester linkage. This Drosophila grimshawi (Hawaiian fruit fly) protein is Ubiquitin-fold modifier-conjugating enzyme 1.